A 236-amino-acid polypeptide reads, in one-letter code: Phosphoribosylaminoimidazole-succinocarboxamide synthase (236 aa).

The protein belongs to the SAICAR synthetase family.

It catalyses the reaction 5-amino-1-(5-phospho-D-ribosyl)imidazole-4-carboxylate + L-aspartate + ATP = (2S)-2-[5-amino-1-(5-phospho-beta-D-ribosyl)imidazole-4-carboxamido]succinate + ADP + phosphate + 2 H(+). It participates in purine metabolism; IMP biosynthesis via de novo pathway; 5-amino-1-(5-phospho-D-ribosyl)imidazole-4-carboxamide from 5-amino-1-(5-phospho-D-ribosyl)imidazole-4-carboxylate: step 1/2. The chain is Phosphoribosylaminoimidazole-succinocarboxamide synthase from Pelodictyon phaeoclathratiforme (strain DSM 5477 / BU-1).